A 75-amino-acid polypeptide reads, in one-letter code: Putative snRNP Sm-like protein (75 aa).

Residues 4-75 enclose the Sm domain; it reads RPLDVIHRSL…NVLAISPTEE (72 aa).

It belongs to the snRNP Sm proteins family.

The chain is Putative snRNP Sm-like protein from Pyrococcus abyssi (strain GE5 / Orsay).